The sequence spans 212 residues: Protein GrpE (212 aa).

The interval 1-68 (MAETSNNKTS…ELESAKKEIE (68 aa)) is disordered. Basic and acidic residues predominate over residues 9–30 (TSEEAKANEKKSQSETLEESKL). Positions 40–60 (ETTQTESMETAETETSLQTEL) are enriched in low complexity.

The protein belongs to the GrpE family. In terms of assembly, homodimer.

It is found in the cytoplasm. Functionally, participates actively in the response to hyperosmotic and heat shock by preventing the aggregation of stress-denatured proteins, in association with DnaK and GrpE. It is the nucleotide exchange factor for DnaK and may function as a thermosensor. Unfolded proteins bind initially to DnaJ; upon interaction with the DnaJ-bound protein, DnaK hydrolyzes its bound ATP, resulting in the formation of a stable complex. GrpE releases ADP from DnaK; ATP binding to DnaK triggers the release of the substrate protein, thus completing the reaction cycle. Several rounds of ATP-dependent interactions between DnaJ, DnaK and GrpE are required for fully efficient folding. This is Protein GrpE from Leptospira interrogans serogroup Icterohaemorrhagiae serovar copenhageni (strain Fiocruz L1-130).